The chain runs to 192 residues: uncharacterized protein (192 aa).

Positions 29 to 160 (QRQAAVLVPI…PLDIHRRGND (132 aa)) constitute a Nudix hydrolase domain. Residues 67–89 (GAVDNTDATLIAAALREAQEEVA) carry the Nudix box motif. Glu83 and Glu87 together coordinate Mg(2+).

This sequence belongs to the Nudix hydrolase family. PCD1 subfamily. The cofactor is Mn(2+). Mg(2+) is required as a cofactor.

Probably mediates the hydrolysis of some nucleoside diphosphate derivatives. This is an uncharacterized protein from Klebsiella pneumoniae (strain 342).